The sequence spans 67 residues: Large ribosomal subunit protein uL29 (67 aa).

Belongs to the universal ribosomal protein uL29 family.

This Methanosarcina barkeri (strain Fusaro / DSM 804) protein is Large ribosomal subunit protein uL29.